The chain runs to 153 residues: Cystatin-9 (153 aa).

An N-terminal signal peptide occupies residues 1–27 (MGRQRRCRWAQPWTLLLLLLGPRLLVT).

The protein belongs to the cystatin family.

Its subcellular location is the secreted. In terms of biological role, may play a role in hematopoietic differentiation or inflammation. The chain is Cystatin-9 (CST9) from Bos taurus (Bovine).